Consider the following 95-residue polypeptide: Aspartyl/glutamyl-tRNA(Asn/Gln) amidotransferase subunit C (95 aa).

Belongs to the GatC family. Heterotrimer of A, B and C subunits.

It carries out the reaction L-glutamyl-tRNA(Gln) + L-glutamine + ATP + H2O = L-glutaminyl-tRNA(Gln) + L-glutamate + ADP + phosphate + H(+). The catalysed reaction is L-aspartyl-tRNA(Asn) + L-glutamine + ATP + H2O = L-asparaginyl-tRNA(Asn) + L-glutamate + ADP + phosphate + 2 H(+). In terms of biological role, allows the formation of correctly charged Asn-tRNA(Asn) or Gln-tRNA(Gln) through the transamidation of misacylated Asp-tRNA(Asn) or Glu-tRNA(Gln) in organisms which lack either or both of asparaginyl-tRNA or glutaminyl-tRNA synthetases. The reaction takes place in the presence of glutamine and ATP through an activated phospho-Asp-tRNA(Asn) or phospho-Glu-tRNA(Gln). The polypeptide is Aspartyl/glutamyl-tRNA(Asn/Gln) amidotransferase subunit C (Pelobacter propionicus (strain DSM 2379 / NBRC 103807 / OttBd1)).